Reading from the N-terminus, the 466-residue chain is Vimentin (466 aa).

Composition is skewed to low complexity over residues 1 to 13 (MSTR…SYRR) and 20 to 33 (TSSR…YVTT). The interval 1–33 (MSTRSVSSSSYRRMFGGSGTSSRPSSNRSYVTT) is disordered. Serine 2 is modified (N-acetylserine). The segment at 2 to 95 (STRSVSSSSY…FSLADAINTE (94 aa)) is head. Residue serine 5 is modified to Phosphoserine. Phosphoserine; by PKA and PKC; alternate is present on serine 7. Residue serine 7 is glycosylated (O-linked (GlcNAc) serine; alternate). At serine 8 the chain carries Phosphoserine. Phosphoserine; by PKC is present on residues serine 9 and serine 10. Threonine 20 carries the post-translational modification Phosphothreonine. A phosphoserine mark is found at serine 25 and serine 26. Threonine 33 is a glycosylation site (O-linked (GlcNAc) threonine). Residue serine 34 is glycosylated (O-linked (GlcNAc) serine; alternate). Serine 34 carries the post-translational modification Phosphoserine; by PKC; alternate. Serine 39 is modified (phosphoserine; by CaMK2, PKA, PKC and ROCK2). At serine 42 the chain carries Phosphoserine; by PKC. At serine 47 the chain carries Phosphoserine; by PKA. Residues serine 49 and serine 51 each carry the phosphoserine modification. At tyrosine 53 the chain carries Phosphotyrosine. Serine 55 and serine 56 each carry phosphoserine. Position 61 is a phosphotyrosine (tyrosine 61). Serine 66 carries the post-translational modification Phosphoserine; by PKA and PKC. Serine 72 is subject to Phosphoserine; by AURKB and ROCK2. Phosphoserine is present on residues serine 73, serine 83, and serine 87. The coil 1A stretch occupies residues 96–131 (FKNTRTNEKVELQELNDRFANYIDKVRFLEQQNKIL). The stretch at 96–131 (FKNTRTNEKVELQELNDRFANYIDKVRFLEQQNKIL) forms a coiled coil. The region spanning 103–411 (EKVELQELND…KLLEGEESRI (309 aa)) is the IF rod domain. Lysine 104 participates in a covalent cross-link: Glycyl lysine isopeptide (Lys-Gly) (interchain with G-Cter in SUMO2). Tyrosine 117 bears the Phosphotyrosine mark. 3 positions are modified to N6-acetyllysine; alternate: lysine 120, lysine 129, and lysine 139. N6-succinyllysine; alternate occurs at positions 120 and 129. Glycyl lysine isopeptide (Lys-Gly) (interchain with G-Cter in SUMO2); alternate cross-links involve residues lysine 120, lysine 129, and lysine 139. Residues 132-153 (LAELEQLKGQGKSRLGDLYEEE) are linker 1. Serine 144 is subject to Phosphoserine. A coiled-coil region spans residues 154–245 (MRELRRQVDQ…KLHDEEIQEL (92 aa)). Residues 154–245 (MRELRRQVDQ…KLHDEEIQEL (92 aa)) are coil 1B. Residue lysine 168 is modified to N6-acetyllysine. The residue at position 188 (lysine 188) is an N6-acetyllysine; alternate. Lysine 188 is subject to N6-succinyllysine; alternate. Serine 214 carries the phosphoserine modification. Residue lysine 223 is modified to N6-acetyllysine; alternate. Lysine 223 participates in a covalent cross-link: Glycyl lysine isopeptide (Lys-Gly) (interchain with G-Cter in SUMO2); alternate. Phosphoserine is present on serine 226. At lysine 235 the chain carries N6-acetyllysine. The segment at 246–268 (QAQIQEQHVQIDVDVSKPDLTAA) is linker 12. Lysine 262 participates in a covalent cross-link: Glycyl lysine isopeptide (Lys-Gly) (interchain with G-Cter in SUMO2). A coil 2 region spans residues 269 to 407 (LRDVRQQYES…ATYRKLLEGE (139 aa)). N6-acetyllysine; alternate is present on lysine 294. Lysine 294 is subject to N6-succinyllysine; alternate. A Glycyl lysine isopeptide (Lys-Gly) (interchain with G-Cter in SUMO2); alternate cross-link involves residue lysine 294. At serine 299 the chain carries Phosphoserine. A coiled-coil region spans residues 303-407 (NRNNDALRQA…ATYRKLLEGE (105 aa)). A Glycyl lysine isopeptide (Lys-Gly) (interchain with G-Cter in SUMO2) cross-link involves residue lysine 313. Serine 325 carries the phosphoserine modification. The [IL]-x-C-x-x-[DE] motif motif lies at 326–329 (LTCE). Lysine 373 carries the post-translational modification N6-acetyllysine; alternate. Residue lysine 373 forms a Glycyl lysine isopeptide (Lys-Gly) (interchain with G-Cter in SUMO2); alternate linkage. Positions 408–466 (ESRISLPLPNFSSLNLRETNLESLPLVDTHSKRTLLIKTVETRDGQVINETSQHHDDLE) are tail. Residues serine 409, serine 412, serine 419, and serine 420 each carry the phosphoserine modification. Threonine 426 carries the post-translational modification Phosphothreonine. Phosphoserine is present on serine 430. Position 436 is a phosphothreonine (threonine 436). At serine 438 the chain carries Phosphoserine. Lysine 439 participates in a covalent cross-link: Glycyl lysine isopeptide (Lys-Gly) (interchain with G-Cter in SUMO2). N6-acetyllysine; alternate is present on lysine 445. Position 445 is an N6-succinyllysine; alternate (lysine 445). A Glycyl lysine isopeptide (Lys-Gly) (interchain with G-Cter in SUMO2); alternate cross-link involves residue lysine 445. Residue lysine 445 forms a Glycyl lysine isopeptide (Lys-Gly) (interchain with G-Cter in SUMO1); alternate linkage. Threonine 446 and threonine 458 each carry phosphothreonine. Serine 459 carries the post-translational modification Phosphoserine.

Belongs to the intermediate filament family. Homomer assembled from elementary dimers. Identified in complexes that contain VIM, EZR, AHNAK, BFSP1, BFSP2, ANK2, PLEC, PRX and spectrin. Interacts with BCAS3. Interacts with LGSN. Interacts with SYNM. Interacts (via rod region) with PLEC (via CH 1 domain). Interacts with STK33. Interacts with LARP6. Interacts with RAB8B. Interacts with TOR1A; the interaction associates TOR1A with the cytoskeleton. Interacts with TOR1AIP1. Interacts with TOR1AIP1. Interacts with DIAPH1. Interacts with EPPK1; interaction is dependent of higher-order structure of intermediate filament. Interacts with the non-receptor tyrosine kinase SRMS; the interaction leads to phosphorylation of VIM. Interacts with NOD2. Interacts (via head region) with CORO1C. Interacts with HDGF. Interacts with PRKCE (via phorbol-ester/DAG-type 2 domain). Interacts with BFSP2. Interacts with PPL. Interacts with PKP1 and PKP2. Interacts with SCRIB (via PDZ domains); the interaction protects SCRIB from proteasomal degradation and facilitates SCRIB localization to intermediate filaments, the interaction is reduced by cell contact inhibition. In terms of processing, one of the most prominent phosphoproteins in various cells of mesenchymal origin. Phosphorylation is enhanced during cell division, at which time vimentin filaments are significantly reorganized. Phosphorylation by PKN1 inhibits the formation of filaments. Filament disassembly during mitosis is promoted by phosphorylation at Ser-55 as well as by nestin. Phosphorylated at Ser-56 by CDK5 during neutrophil secretion in the cytoplasm. Phosphorylated by STK33. Phosphorylated on tyrosine residues by SRMS. Post-translationally, S-nitrosylation is induced by interferon-gamma and oxidatively-modified low-densitity lipoprotein (LDL(ox)) possibly implicating the iNOS-S100A8/9 transnitrosylase complex.

Its subcellular location is the cytoplasm. It is found in the cytoskeleton. It localises to the nucleus matrix. The protein resides in the cell membrane. In terms of biological role, vimentins are class-III intermediate filaments found in various non-epithelial cells, especially mesenchymal cells. Vimentin is attached to the nucleus, endoplasmic reticulum, and mitochondria, either laterally or terminally. Plays a role in cell directional movement, orientation, cell sheet organization and Golgi complex polarization at the cell migration front. Protects SCRIB from proteasomal degradation and facilitates its localization to intermediate filaments in a cell contact-mediated manner. Functionally, involved with LARP6 in the stabilization of type I collagen mRNAs for CO1A1 and CO1A2. The protein is Vimentin of Rattus norvegicus (Rat).